Here is a 163-residue protein sequence, read N- to C-terminus: ATP synthase subunit b, sodium ion specific (163 aa).

Residues 9 to 29 (VSIDINMFWQIINFLILMFFF) traverse the membrane as a helical segment.

It belongs to the ATPase B chain family. In terms of assembly, F-type ATPases have 2 components, F(1) - the catalytic core - and F(0) - the membrane proton channel. F(1) has five subunits: alpha(3), beta(3), gamma(1), delta(1), epsilon(1). F(0) has three main subunits: a(1), b(2) and c(10-14). The alpha and beta chains form an alternating ring which encloses part of the gamma chain. F(1) is attached to F(0) by a central stalk formed by the gamma and epsilon chains, while a peripheral stalk is formed by the delta and b chains.

The protein resides in the cell inner membrane. Its function is as follows. F(1)F(0) ATP synthase produces ATP from ADP in the presence of a proton or sodium gradient. F-type ATPases consist of two structural domains, F(1) containing the extramembraneous catalytic core and F(0) containing the membrane proton channel, linked together by a central stalk and a peripheral stalk. During catalysis, ATP synthesis in the catalytic domain of F(1) is coupled via a rotary mechanism of the central stalk subunits to proton translocation. Functionally, component of the F(0) channel, it forms part of the peripheral stalk, linking F(1) to F(0). The sequence is that of ATP synthase subunit b, sodium ion specific (atpF) from Ilyobacter tartaricus.